The following is a 241-amino-acid chain: Venom nerve growth factor (241 aa).

A signal peptide spans Met-1–Ala-18. A propeptide spanning residues Ala-19 to Arg-122 is cleaved from the precursor. 3 disulfide bridges follow: Cys-136–Cys-201, Cys-179–Cys-229, and Cys-189–Cys-231. Asn-145 is a glycosylation site (N-linked (GlcNAc...) asparagine).

This sequence belongs to the NGF-beta family. As to quaternary structure, homodimer; non-covalently linked. Expressed by the venom gland.

Its subcellular location is the secreted. In terms of biological role, nerve growth factor is important for the development and maintenance of the sympathetic and sensory nervous systems. It stimulates division and differentiation of sympathetic and embryonic sensory neurons as well as basal forebrain cholinergic neurons in the brain. Its relevance in the snake venom is not clear. However, it has been shown to inhibit metalloproteinase-dependent proteolysis of platelet glycoprotein Ib alpha, suggesting a metalloproteinase inhibition to prevent metalloprotease autodigestion and/or protection against prey proteases. Binds a lipid between the two protein chains in the homodimer. The lipid-bound form promotes histamine relase from mouse mast cells, contrary to the lipid-free form. This Crotalus durissus terrificus (South American rattlesnake) protein is Venom nerve growth factor.